Here is a 438-residue protein sequence, read N- to C-terminus: Trigger factor (438 aa).

Residues 160–245 form the PPIase FKBP-type domain; sequence DDKVTIDFVG…VKKIQQAELP (86 aa).

The protein belongs to the FKBP-type PPIase family. Tig subfamily.

It localises to the cytoplasm. It carries out the reaction [protein]-peptidylproline (omega=180) = [protein]-peptidylproline (omega=0). Functionally, involved in protein export. Acts as a chaperone by maintaining the newly synthesized protein in an open conformation. Functions as a peptidyl-prolyl cis-trans isomerase. In Francisella tularensis subsp. tularensis (strain FSC 198), this protein is Trigger factor.